The chain runs to 382 residues: MKNAVHFGAGNIGRGFIGKLLADANVAVTFADVDAPLVDQLSHKQEYKVKVVGSECQIDTVTHVTAVNSASEEVIDRIVQTDLVTTAVGPNVLDIIAKTIAQGIAKRFAAGNLAPLNIIACENMVRGTTHLKGEVYKHLDASLHAQADELVGFVDSAVDRIVPPAEAANDDPLEVTVESFSEWIVDEQQFKGEVPSIAGMEKTHNLMAFVERKLFTLNTGHCITAYLGCLQGHRTIREAIENPAIRDQVKQAMMESGEVLIRRYGFDREMHQAYIEKILARFANPFLVDEVDRVGRQPIRKLGMNDRLIKPLLGTIEFGTANQHLLKGIAAALKYQNDSDPQAVELQRSLQQVGVKKTLAKYTSLAEDSVEVAKIETLYNQL.

4-15 lines the NAD(+) pocket; sequence AVHFGAGNIGRG.

Belongs to the mannitol dehydrogenase family.

It catalyses the reaction D-mannitol 1-phosphate + NAD(+) = beta-D-fructose 6-phosphate + NADH + H(+). This chain is Mannitol-1-phosphate 5-dehydrogenase, found in Vibrio vulnificus (strain CMCP6).